We begin with the raw amino-acid sequence, 79 residues long: ATP synthase subunit c (79 aa).

2 helical membrane passes run 10–30 and 52–72; these read IAGA…IGVL and FFIV…LAMY.

It belongs to the ATPase C chain family. F-type ATPases have 2 components, F(1) - the catalytic core - and F(0) - the membrane proton channel. F(1) has five subunits: alpha(3), beta(3), gamma(1), delta(1), epsilon(1). F(0) has three main subunits: a(1), b(2) and c(10-14). The alpha and beta chains form an alternating ring which encloses part of the gamma chain. F(1) is attached to F(0) by a central stalk formed by the gamma and epsilon chains, while a peripheral stalk is formed by the delta and b chains.

The protein resides in the cell inner membrane. F(1)F(0) ATP synthase produces ATP from ADP in the presence of a proton or sodium gradient. F-type ATPases consist of two structural domains, F(1) containing the extramembraneous catalytic core and F(0) containing the membrane proton channel, linked together by a central stalk and a peripheral stalk. During catalysis, ATP synthesis in the catalytic domain of F(1) is coupled via a rotary mechanism of the central stalk subunits to proton translocation. Its function is as follows. Key component of the F(0) channel; it plays a direct role in translocation across the membrane. A homomeric c-ring of between 10-14 subunits forms the central stalk rotor element with the F(1) delta and epsilon subunits. This Thiobacillus denitrificans (strain ATCC 25259 / T1) protein is ATP synthase subunit c.